A 609-amino-acid polypeptide reads, in one-letter code: UvrABC system protein C (609 aa).

Residues 13–91 form the GIY-YIG domain; it reads HQPGVYRMFD…IKAFQPRYNV (79 aa). A UVR domain is found at 201 to 236; the sequence is QQVLEHLIKKMEQASMQLNFEQAAYFRDQIQAIRAV.

This sequence belongs to the UvrC family. Interacts with UvrB in an incision complex.

The protein resides in the cytoplasm. In terms of biological role, the UvrABC repair system catalyzes the recognition and processing of DNA lesions. UvrC both incises the 5' and 3' sides of the lesion. The N-terminal half is responsible for the 3' incision and the C-terminal half is responsible for the 5' incision. This is UvrABC system protein C from Histophilus somni (strain 129Pt) (Haemophilus somnus).